The following is a 182-amino-acid chain: uncharacterized protein (182 aa).

Disordered regions lie at residues 1 to 49 (MAAP…DGGS) and 126 to 171 (QGGH…VHAQ). The span at 17–39 (ELLEKAARLERGPPPRGDPEAVG) shows a compositional bias: basic and acidic residues.

This is an uncharacterized protein from Homo sapiens (Human).